The chain runs to 92 residues: Small ribosomal subunit protein uS19 (92 aa).

It belongs to the universal ribosomal protein uS19 family.

In terms of biological role, protein S19 forms a complex with S13 that binds strongly to the 16S ribosomal RNA. This is Small ribosomal subunit protein uS19 from Rickettsia felis (strain ATCC VR-1525 / URRWXCal2) (Rickettsia azadi).